A 387-amino-acid polypeptide reads, in one-letter code: Chaperone protein DnaJ (387 aa).

A J domain is found at 4 to 68 (DFYDVLGVSR…EKRQMYDQLG (65 aa)). Positions 76–135 (EKRGGVGGGGNSSGGSARGDPFGGMGGQGSPFGDIFEQFFGGGQGQRRQGNRPRQGQNLQ) are disordered. Positions 80 to 105 (GVGGGGNSSGGSARGDPFGGMGGQGS) are enriched in gly residues. Low complexity predominate over residues 121–133 (QRRQGNRPRQGQN). A CR-type zinc finger spans residues 148-230 (GVEKQFTVRR…CNGDGVTRQE (83 aa)). Zn(2+) is bound by residues Cys-161, Cys-164, Cys-178, Cys-181, Cys-204, Cys-207, Cys-218, and Cys-221. CXXCXGXG motif repeat units follow at residues 161–168 (CPDCNGRG), 178–185 (CPQCNGQG), 204–211 (CPRCDGSG), and 218–225 (CSTCNGDG).

It belongs to the DnaJ family. Homodimer. It depends on Zn(2+) as a cofactor.

It localises to the cytoplasm. In terms of biological role, participates actively in the response to hyperosmotic and heat shock by preventing the aggregation of stress-denatured proteins and by disaggregating proteins, also in an autonomous, DnaK-independent fashion. Unfolded proteins bind initially to DnaJ; upon interaction with the DnaJ-bound protein, DnaK hydrolyzes its bound ATP, resulting in the formation of a stable complex. GrpE releases ADP from DnaK; ATP binding to DnaK triggers the release of the substrate protein, thus completing the reaction cycle. Several rounds of ATP-dependent interactions between DnaJ, DnaK and GrpE are required for fully efficient folding. Also involved, together with DnaK and GrpE, in the DNA replication of plasmids through activation of initiation proteins. This is Chaperone protein DnaJ from Haloquadratum walsbyi (strain DSM 16790 / HBSQ001).